The following is a 197-amino-acid chain: Glycerol-3-phosphate acyltransferase (197 aa).

The next 5 helical transmembrane spans lie at 7–27, 56–76, 82–102, 116–136, and 157–177; these read PSIA…LLLT, LAAL…WIAW, DIGW…WLGF, FGLG…MLAI, and YFGR…IIWL.

It belongs to the PlsY family. As to quaternary structure, probably interacts with PlsX.

It is found in the cell inner membrane. It catalyses the reaction an acyl phosphate + sn-glycerol 3-phosphate = a 1-acyl-sn-glycero-3-phosphate + phosphate. Its pathway is lipid metabolism; phospholipid metabolism. Functionally, catalyzes the transfer of an acyl group from acyl-phosphate (acyl-PO(4)) to glycerol-3-phosphate (G3P) to form lysophosphatidic acid (LPA). This enzyme utilizes acyl-phosphate as fatty acyl donor, but not acyl-CoA or acyl-ACP. The protein is Glycerol-3-phosphate acyltransferase of Erythrobacter litoralis (strain HTCC2594).